A 127-amino-acid polypeptide reads, in one-letter code: Small ribosomal subunit protein uS13 (127 aa).

The interval 92 to 127 (HRQGLPVRGQRTRTNARTRRGRRLTVAGKKKAPSKK) is disordered. The segment covering 101–127 (QRTRTNARTRRGRRLTVAGKKKAPSKK) has biased composition (basic residues).

It belongs to the universal ribosomal protein uS13 family. As to quaternary structure, part of the 30S ribosomal subunit. Forms a loose heterodimer with protein S19. Forms two bridges to the 50S subunit in the 70S ribosome.

In terms of biological role, located at the top of the head of the 30S subunit, it contacts several helices of the 16S rRNA. In the 70S ribosome it contacts the 23S rRNA (bridge B1a) and protein L5 of the 50S subunit (bridge B1b), connecting the 2 subunits; these bridges are implicated in subunit movement. Contacts the tRNAs in the A and P-sites. This Gloeothece citriformis (strain PCC 7424) (Cyanothece sp. (strain PCC 7424)) protein is Small ribosomal subunit protein uS13.